The following is a 474-amino-acid chain: Cysteine--tRNA ligase (474 aa).

Residue Cys-27 coordinates Zn(2+). The 'HIGH' region motif lies at 29 to 39 (ITPYDHMHVGH). Positions 213, 238, and 242 each coordinate Zn(2+). The short motif at 271 to 275 (KMSKS) is the 'KMSKS' region element. Lys-274 is a binding site for ATP.

This sequence belongs to the class-I aminoacyl-tRNA synthetase family. Zn(2+) serves as cofactor.

It is found in the cytoplasm. It catalyses the reaction tRNA(Cys) + L-cysteine + ATP = L-cysteinyl-tRNA(Cys) + AMP + diphosphate. This is Cysteine--tRNA ligase from Pyrobaculum neutrophilum (strain DSM 2338 / JCM 9278 / NBRC 100436 / V24Sta) (Thermoproteus neutrophilus).